The following is a 263-amino-acid chain: Tryptophan 2,3-dioxygenase (263 aa).

Substrate is bound by residues 32–36, Tyr-94, and Arg-98; that span reads FIIVH. His-221 is a binding site for heme. Thr-235 lines the substrate pocket.

The protein belongs to the tryptophan 2,3-dioxygenase family. Homotetramer. The cofactor is heme.

The enzyme catalyses L-tryptophan + O2 = N-formyl-L-kynurenine. Its pathway is amino-acid degradation; L-tryptophan degradation via kynurenine pathway; L-kynurenine from L-tryptophan: step 1/2. Heme-dependent dioxygenase that catalyzes the oxidative cleavage of the L-tryptophan (L-Trp) pyrrole ring and converts L-tryptophan to N-formyl-L-kynurenine. Catalyzes the oxidative cleavage of the indole moiety. The polypeptide is Tryptophan 2,3-dioxygenase (Erythrobacter litoralis (strain HTCC2594)).